Reading from the N-terminus, the 294-residue chain is 33 kDa chaperonin (294 aa).

Intrachain disulfides connect Cys238–Cys240 and Cys271–Cys274.

It belongs to the HSP33 family. Under oxidizing conditions two disulfide bonds are formed involving the reactive cysteines. Under reducing conditions zinc is bound to the reactive cysteines and the protein is inactive.

The protein resides in the cytoplasm. Its function is as follows. Redox regulated molecular chaperone. Protects both thermally unfolding and oxidatively damaged proteins from irreversible aggregation. Plays an important role in the bacterial defense system toward oxidative stress. The polypeptide is 33 kDa chaperonin (Thermoanaerobacter pseudethanolicus (strain ATCC 33223 / 39E) (Clostridium thermohydrosulfuricum)).